The following is a 270-amino-acid chain: Insulin-like growth factor-binding protein-like 1 (270 aa).

A signal peptide spans 1-17 (MPRLPLLLLLLPSLARG). Residues 26-101 (RHPECSPCQQ…PEGTGLCVCA (76 aa)) form the IGFBP N-terminal domain. 7 disulfides stabilise this stretch: Cys-30/Cys-55, Cys-33/Cys-57, Cys-38/Cys-58, Cys-44/Cys-61, Cys-69/Cys-83, Cys-77/Cys-98, and Cys-107/Cys-143. The Kazal-like domain maps to 87-145 (ASGTAPEGTGLCVCAQRGAVCGSDGRSYSSICALRLRARHAPRAHHGHLHKARDGPCEF). The Ig-like C2-type domain occupies 147–251 (PVVLMPPRDI…GEAQSHGTVT (105 aa)). Asn-158 carries N-linked (GlcNAc...) asparagine glycosylation. Cys-168 and Cys-235 are oxidised to a cystine.

The protein resides in the secreted. Its function is as follows. IGF-binding proteins prolong the half-life of IGFs and have been shown to either inhibit or stimulate the growth promoting effects of the IGFs in cell culture. They alter the interaction of IGFs with their cell surface receptors. This is Insulin-like growth factor-binding protein-like 1 (Igfbpl1) from Mus musculus (Mouse).